Consider the following 225-residue polypeptide: Chalcone--flavanone isomerase 3 (225 aa).

Thr51, Asn116, and Thr193 together coordinate substrate.

Belongs to the chalcone isomerase family.

It catalyses the reaction a chalcone = a flavanone.. It participates in secondary metabolite biosynthesis; flavonoid biosynthesis. Its function is as follows. Catalyzes the intramolecular cyclization of bicyclic chalcones into tricyclic (S)-flavanones. Responsible for the isomerization of 4,2',4',6'-tetrahydroxychalcone (also termed chalcone) into naringenin. In Lotus japonicus (Lotus corniculatus var. japonicus), this protein is Chalcone--flavanone isomerase 3 (CHI3).